A 339-amino-acid polypeptide reads, in one-letter code: DNA-directed RNA polymerase subunit alpha (339 aa).

Positions 1–233 are alpha N-terminal domain (alpha-NTD); it reads MVREEVAGST…DLFLPFLHAE (233 aa). The tract at residues 266-339 is alpha C-terminal domain (alpha-CTD); the sequence is GIPLNCIFID…IDLLKNKLSF (74 aa).

This sequence belongs to the RNA polymerase alpha chain family. In plastids the minimal PEP RNA polymerase catalytic core is composed of four subunits: alpha, beta, beta', and beta''. When a (nuclear-encoded) sigma factor is associated with the core the holoenzyme is formed, which can initiate transcription.

The protein localises to the plastid. It localises to the chloroplast. The catalysed reaction is RNA(n) + a ribonucleoside 5'-triphosphate = RNA(n+1) + diphosphate. DNA-dependent RNA polymerase catalyzes the transcription of DNA into RNA using the four ribonucleoside triphosphates as substrates. This Aegilops speltoides (Goatgrass) protein is DNA-directed RNA polymerase subunit alpha.